The chain runs to 125 residues: Large ribosomal subunit protein bL12 (125 aa).

It belongs to the bacterial ribosomal protein bL12 family. As to quaternary structure, homodimer. Part of the ribosomal stalk of the 50S ribosomal subunit. Forms a multimeric L10(L12)X complex, where L10 forms an elongated spine to which 2 to 4 L12 dimers bind in a sequential fashion. Binds GTP-bound translation factors.

In terms of biological role, forms part of the ribosomal stalk which helps the ribosome interact with GTP-bound translation factors. Is thus essential for accurate translation. The polypeptide is Large ribosomal subunit protein bL12 (Cereibacter sphaeroides (Rhodobacter sphaeroides)).